The chain runs to 179 residues: Large ribosomal subunit protein uL6 (179 aa).

This sequence belongs to the universal ribosomal protein uL6 family. As to quaternary structure, part of the 50S ribosomal subunit.

In terms of biological role, this protein binds to the 23S rRNA, and is important in its secondary structure. It is located near the subunit interface in the base of the L7/L12 stalk, and near the tRNA binding site of the peptidyltransferase center. The chain is Large ribosomal subunit protein uL6 from Geobacter metallireducens (strain ATCC 53774 / DSM 7210 / GS-15).